We begin with the raw amino-acid sequence, 436 residues long: Chromosomal replication initiator protein DnaA (436 aa).

The segment at 1–69 (MLADEVIELL…ANIFEVKTGI (69 aa)) is domain I, interacts with DnaA modulators. Positions 69–99 (IKPVISITTQKNRVSIKAKDIDVKQIRTQSS) are domain II. Positions 100-314 (LLNPSYTFES…SAIININAFA (215 aa)) are domain III, AAA+ region. ATP-binding residues include G144, G146, K147, and T148. Residues 315-436 (NIMRQEITLE…ELKNKITSKE (122 aa)) are domain IV, binds dsDNA.

The protein belongs to the DnaA family. In terms of assembly, oligomerizes as a right-handed, spiral filament on DNA at oriC.

Its subcellular location is the cytoplasm. Functionally, plays an essential role in the initiation and regulation of chromosomal replication. ATP-DnaA binds to the origin of replication (oriC) to initiate formation of the DNA replication initiation complex once per cell cycle. Binds the DnaA box (a 9 base pair repeat at the origin) and separates the double-stranded (ds)DNA. Forms a right-handed helical filament on oriC DNA; dsDNA binds to the exterior of the filament while single-stranded (ss)DNA is stabiized in the filament's interior. The ATP-DnaA-oriC complex binds and stabilizes one strand of the AT-rich DNA unwinding element (DUE), permitting loading of DNA polymerase. After initiation quickly degrades to an ADP-DnaA complex that is not apt for DNA replication. Binds acidic phospholipids. This chain is Chromosomal replication initiator protein DnaA, found in Campylobacter fetus subsp. fetus (strain 82-40).